A 387-amino-acid polypeptide reads, in one-letter code: Succinate--CoA ligase [ADP-forming] subunit beta (387 aa).

ATP is bound by residues Lys46, 53-55 (GRG), Glu99, Ala102, and Glu107. Mg(2+) contacts are provided by Asn199 and Asp213. Residues Asn264 and 321–323 (GIV) contribute to the substrate site.

The protein belongs to the succinate/malate CoA ligase beta subunit family. Heterotetramer of two alpha and two beta subunits. Mg(2+) is required as a cofactor.

It carries out the reaction succinate + ATP + CoA = succinyl-CoA + ADP + phosphate. It catalyses the reaction GTP + succinate + CoA = succinyl-CoA + GDP + phosphate. It functions in the pathway carbohydrate metabolism; tricarboxylic acid cycle; succinate from succinyl-CoA (ligase route): step 1/1. Functionally, succinyl-CoA synthetase functions in the citric acid cycle (TCA), coupling the hydrolysis of succinyl-CoA to the synthesis of either ATP or GTP and thus represents the only step of substrate-level phosphorylation in the TCA. The beta subunit provides nucleotide specificity of the enzyme and binds the substrate succinate, while the binding sites for coenzyme A and phosphate are found in the alpha subunit. This is Succinate--CoA ligase [ADP-forming] subunit beta from Campylobacter jejuni (strain RM1221).